A 379-amino-acid chain; its full sequence is 2-nitroimidazole nitrohydrolase (379 aa).

Cysteine 357 functions as the Amidino-cysteine intermediate in the catalytic mechanism.

This sequence belongs to the arginine deiminase family.

It carries out the reaction 2-nitroimidazole + H2O = 1,3-dihydro-2H-imidazol-2-one + nitrite + H(+). Its function is as follows. Involved in the biodegradation of 2-Nitroimidazole (2NI) which is a natural antibiotic and an analog of the synthetic nitroimidazoles used for treatment of tuberculosis, Chagas disease (also called American Trypanosomiasis) and cancer. Catalyzes the hydrolytic denitration of 2NI to produce imidazol-2-one and nitrite. It is also active against the 2NI synthetic derivative benznidazole. NnhA confers drug resistance to 2NI. The sequence is that of 2-nitroimidazole nitrohydrolase (nnhA) from Mycobacterium sp. (strain JS330).